The primary structure comprises 82 residues: Small ribosomal subunit protein bS16 (82 aa).

Belongs to the bacterial ribosomal protein bS16 family.

In Vibrio atlanticus (strain LGP32) (Vibrio splendidus (strain Mel32)), this protein is Small ribosomal subunit protein bS16.